We begin with the raw amino-acid sequence, 446 residues long: MSNFSRSTRRKFMFTAGAAAIGGVVLHGCTSPTTTSTGTGTGSSTDQAISPLVEGENAPEVTTAKLGFIALTDAAPLIIAKEKGFYAKYGMPDVEVLKQASWGTTRDNLVLGSASGGIDGAHILTPMPYLITMGTVTDGKPTPMYILARLNVNGQGIQLGNNYKDLKVGTDAAPLKEAFAKVTDPKVAMTFPGGTHDMWIRYWLAAGGMEPGKDFSTIVVPPAQMVANVKVNAMESFCVGEPWPLQTVNQGVGYQALTTGQLWKDHPEKAFGMRADWVDQNPKAAKALLMAVMEAQQWCDQAENKEEMCQILSKREWFKVPFEDIIDRSKGIYNFGNGQETFEDQEIMQKYWVDNASYPYKSHDQWFLTENIRWGYLPASTDTKAIVDKVNREDLWREAAQALEVPADQIPSSPSRGIETFFDGITFDPENPQAYLDSLKIKSIKA.

The signal sequence occupies residues 1–28 (MSNFSRSTRRKFMFTAGAAAIGGVVLHG). The N-palmitoyl cysteine moiety is linked to residue Cys-29. Cys-29 is lipidated: S-diacylglycerol cysteine. Nitrate contacts are provided by Trp-102, Gln-155, His-196, Gly-240, and Lys-269.

This sequence belongs to the CmpA/NrtA family. In terms of assembly, the complex is composed of two ATP-binding proteins (NrtC and NrtD), two transmembrane proteins (NrtB) and a solute-binding protein (NrtA).

The protein localises to the cell inner membrane. Part of the ABC transporter complex NrtABCD involved in nitrate uptake. The complex is probably also involved in nitrite transport. NrtA is the substrate-binding protein. Binds nitrate. This chain is Nitrate/nitrite binding protein NrtA, found in Synechocystis sp. (strain ATCC 27184 / PCC 6803 / Kazusa).